Here is a 593-residue protein sequence, read N- to C-terminus: MSGKIEYISGPVVKAELPGARLYELVFVGEIKLFGEVVRIQGEKAFIQVYEDTTGLKPGEPVERTGEPLSAWLGPTIIGKIYDGVQRPLRNIEEISKNPFIARGIGYDKAPPLDLKAEFDFKPAVKPGEEVYPGDVLGSVKETEPMTHYILYPPLPEHAPGVVEWIADGKYKVDDVIARVKTKRGVVEVKMWHKWPVRRPRPFKEKLPPVEPLITGVRTVDTMFPIAKGGTAAVPGPFGSGKTVMIRTLSMFAQSRFIIPVLCGERGNEAADALQGLLKLKDPSTGRPLLERTTIIVNTSNMPVAAREASVYMGTTLGEYFRDQGYDVLVLADSTSRWAEAMREVALRIGEMPSEEGYPAYLPTRLAEFYERAGRVVLYGSKERVGSLTIAASVSPPGGDFTEPVTSNTLRFIGAFWPLSPRLAYSRHYPAIDWLVAFSRYVDTVEVWWSKNVSPEWRRIRDALQSILVKEAELQEIVRILGTEALSEYEKHILNVAFMIREGFLKQDAYNPVDTPSAPIKQFLLMKAIYTYYEEGLKAIESGVPASVLRELETVKRLPRLRMEVTNDVAKEELTKFIESLVAEIRATTNRRG.

236 to 243 (GPFGSGKT) serves as a coordination point for ATP.

Belongs to the ATPase alpha/beta chains family. Has multiple subunits with at least A(3), B(3), C, D, E, F, H, I and proteolipid K(x).

It localises to the cell membrane. The enzyme catalyses ATP + H2O + 4 H(+)(in) = ADP + phosphate + 5 H(+)(out). Functionally, produces ATP from ADP in the presence of a proton gradient across the membrane. The archaeal alpha chain is a catalytic subunit. Its function is as follows. Component of the A-type ATP synthase that produces ATP from ADP in the presence of a proton gradient across the membrane. The A chain is the catalytic subunit. This chain is A-type ATP synthase subunit A, found in Pyrobaculum aerophilum (strain ATCC 51768 / DSM 7523 / JCM 9630 / CIP 104966 / NBRC 100827 / IM2).